The following is a 193-amino-acid chain: uncharacterized protein (193 aa).

Residues 55 to 94 form a disordered region; the sequence is PVGGAAGARSLSQALPAPAPPPPPPPGLGPSSERPWPSPW. The span at 71–82 shows a compositional bias: pro residues; that stretch reads APAPPPPPPPGL.

This is an uncharacterized protein from Homo sapiens (Human).